The chain runs to 333 residues: Low specificity L-threonine aldolase (333 aa).

K197 carries the N6-(pyridoxal phosphate)lysine modification.

The protein belongs to the threonine aldolase family. As to quaternary structure, homotetramer. Pyridoxal 5'-phosphate is required as a cofactor.

The enzyme catalyses L-threonine = acetaldehyde + glycine. It catalyses the reaction L-allo-threonine = acetaldehyde + glycine. In terms of biological role, catalyzes the cleavage of L-allo-threonine and L-threonine to glycine and acetaldehyde. L-threo-phenylserine and L-erythro-phenylserine are also good substrates. This Escherichia coli O157:H7 protein is Low specificity L-threonine aldolase (ltaE).